The chain runs to 260 residues: Deoxycytidine kinase (260 aa).

Residues Ser11 and Ser15 each carry the phosphoserine; by CK1 modification. 28 to 36 (GNIAAGKST) contacts ATP. Substrate is bound at residue Glu53. Thr72 bears the Phosphothreonine; by CK1 mark. At Ser74 the chain carries Phosphoserine. Substrate-binding residues include Tyr86 and Gln97. The active-site Proton acceptor is Glu127. Substrate contacts are provided by Arg128 and Asp133. Residue 188-192 (RIYLR) coordinates ATP. Position 197 (Glu197) interacts with substrate. 240 to 242 (EDF) provides a ligand contact to ATP.

This sequence belongs to the DCK/DGK family. As to quaternary structure, homodimer. Phosphorylated and activated in vitro upon phosphorylation at Ser-74 by CSNK1D/CK1.

Its subcellular location is the nucleus. The enzyme catalyses 2'-deoxycytidine + a ribonucleoside 5'-triphosphate = dCMP + a ribonucleoside 5'-diphosphate + H(+). It catalyses the reaction 2'-deoxyadenosine + ATP = dAMP + ADP + H(+). The catalysed reaction is 2'-deoxyguanosine + ATP = dGMP + ADP + H(+). Phosphorylates the deoxyribonucleosides deoxycytidine, deoxyguanosine and deoxyadenosine. Has broad substrate specificity, and does not display selectivity based on the chirality of the substrate. It is also an essential enzyme for the phosphorylation of numerous nucleoside analogs widely employed as antiviral and chemotherapeutic agents. This Homo sapiens (Human) protein is Deoxycytidine kinase (DCK).